The chain runs to 74 residues: Mitochondrial import receptor subunit TOM6 homolog (74 aa).

Residues 1 to 16 show a composition bias toward polar residues; sequence MASSTVPVSAAGSANE. A disordered region spans residues 1–22; that stretch reads MASSTVPVSAAGSANETPEIPD. A2 is subject to N-acetylalanine.

The protein belongs to the Tom6 family. In terms of assembly, forms part of the preprotein translocase complex of the outer mitochondrial membrane (TOM complex) which consists of at least 7 different proteins (TOMM5, TOMM6, TOMM7, TOMM20, TOMM22, TOMM40 and TOMM70).

The protein resides in the mitochondrion outer membrane. The sequence is that of Mitochondrial import receptor subunit TOM6 homolog (TOMM6) from Homo sapiens (Human).